The chain runs to 166 residues: NAD(P)H-quinone oxidoreductase subunit I, chloroplastic (166 aa).

2 consecutive 4Fe-4S ferredoxin-type domains span residues 55–84 and 95–124; these read GRIHFEFDKCIACEVCVRVCPIDLPVVDWK and LNYSIDFGICIFCGNCVEYCPTNCLSMTEE. [4Fe-4S] cluster contacts are provided by C64, C67, C70, C74, C104, C107, C110, and C114.

Belongs to the complex I 23 kDa subunit family. In terms of assembly, NDH is composed of at least 16 different subunits, 5 of which are encoded in the nucleus. The cofactor is [4Fe-4S] cluster.

The protein localises to the plastid. Its subcellular location is the chloroplast thylakoid membrane. It catalyses the reaction a plastoquinone + NADH + (n+1) H(+)(in) = a plastoquinol + NAD(+) + n H(+)(out). It carries out the reaction a plastoquinone + NADPH + (n+1) H(+)(in) = a plastoquinol + NADP(+) + n H(+)(out). Its function is as follows. NDH shuttles electrons from NAD(P)H:plastoquinone, via FMN and iron-sulfur (Fe-S) centers, to quinones in the photosynthetic chain and possibly in a chloroplast respiratory chain. The immediate electron acceptor for the enzyme in this species is believed to be plastoquinone. Couples the redox reaction to proton translocation, and thus conserves the redox energy in a proton gradient. The sequence is that of NAD(P)H-quinone oxidoreductase subunit I, chloroplastic from Aphanactis jamesoniana.